The chain runs to 160 residues: Transcription factor 12 (160 aa).

Positions 1 to 58 (NKEKDENLHEPPSSDDMKSDDESSQKDIKVSSRGRTSTNEDEDLNPEQKIEREKERRM) are disordered. Positions 15–30 (DDMKSDDESSQKDIKV) are enriched in basic and acidic residues. A Phosphoserine modification is found at Ser19. Residue Lys29 forms a Glycyl lysine isopeptide (Lys-Gly) (interchain with G-Cter in SUMO2) linkage. The residue at position 36 (Thr36) is a Phosphothreonine. Phosphoserine is present on Ser37. Basic and acidic residues predominate over residues 46–58 (PEQKIEREKERRM). The region spanning 55–108 (ERRMANNARERLRVRDINEAFKELGRMCQLHLKSEKPQTKLLILHQAVAVILSL) is the bHLH domain. Glycyl lysine isopeptide (Lys-Gly) (interchain with G-Cter in SUMO2) cross-links involve residues Lys87 and Lys131. Residues 110 to 133 (QQVRERNLNPKAACLKRREEEKVS) form a class A specific domain region. A disordered region spans residues 132 to 160 (VSVVSAEPPTTLPGTHPGLSETTNPMGHM). The segment covering 139 to 150 (PPTTLPGTHPGL) has biased composition (low complexity). A compositionally biased stretch (polar residues) spans 151–160 (SETTNPMGHM).

As to quaternary structure, efficient DNA binding requires dimerization with another bHLH protein. Forms homo- or heterooligomers with myogenin, E12 and ITF2 proteins. Interacts with PTF1A. Interacts with RUNX1T1. Interacts with NEUROD2. Interacts with BHLHA9.

The protein resides in the nucleus. Its function is as follows. Transcriptional regulator. Involved in the initiation of neuronal differentiation. Activates transcription by binding to the E box (5'-CANNTG-3'). May be involved in the functional network that regulates the development of the GnRH axis. The sequence is that of Transcription factor 12 (TCF12) from Papio hamadryas (Hamadryas baboon).